Reading from the N-terminus, the 75-residue chain is Conotoxin Im23.5 (75 aa).

Positions 1 to 23 are cleaved as a signal peptide; it reads MKFFTCLLLLLVVLTVVFDNVDA. Intrachain disulfides connect C24-C28, C37-C40, and C41-C43. Positions 24-50 are excised as a propeptide; that stretch reads CDRSCTGVMGHPSCATCCACFTSAGKR.

Expressed by the venom duct.

The protein localises to the secreted. Probable neurotoxin. The polypeptide is Conotoxin Im23.5 (Conus imperialis (Imperial cone)).